The chain runs to 385 residues: Glucans biosynthesis protein C (385 aa).

10 helical membrane-spanning segments follow: residues 17 to 37, 60 to 80, 91 to 111, 137 to 157, 173 to 193, 212 to 232, 239 to 259, 274 to 294, 311 to 331, and 338 to 358; these read AWLMLLGIPFHISLIYSSHTW, MQVFFVISGYFSYMLFLRYPL, VGIPMLTAIPLLTLPQFIMLQ, ISHLWFLLVLVVMTTLCVWIF, KFSMVKLSVIFLCLGIGYAVI, FIVMQTLFYLPFFILGALAFI, LFTTPSRGCTLAAALAFVAYL, TESVITMVLGLWMVNVVFSFG, ASLFIYLVHHPLTLFFGAYIT, and WLGFLCGLIFVVGIAIILYEI.

Belongs to the acyltransferase 3 family. OpgC subfamily.

Its subcellular location is the cell membrane. It participates in glycan metabolism; osmoregulated periplasmic glucan (OPG) biosynthesis. In terms of biological role, necessary for the succinyl substitution of periplasmic glucans. Could catalyze the transfer of succinyl residues from the cytoplasmic side of the membrane to the nascent glucan backbones on the periplasmic side of the membrane. This Escherichia coli O17:K52:H18 (strain UMN026 / ExPEC) protein is Glucans biosynthesis protein C.